Here is a 345-residue protein sequence, read N- to C-terminus: Holliday junction branch migration complex subunit RuvB (345 aa).

Residues 1-186 (MSTDPDEREV…FGFTAHMDFY (186 aa)) are large ATPase domain (RuvB-L). ATP-binding positions include L25, R26, G67, K70, T71, S72, 133 to 135 (EDF), R176, Y186, and R223. T71 is a Mg(2+) binding site. The small ATPAse domain (RuvB-S) stretch occupies residues 187 to 257 (EPAELERVLV…VAKAALAVYD (71 aa)). The head domain (RuvB-H) stretch occupies residues 260–345 (ELGLDRLDRA…AGANQPGLFE (86 aa)). DNA is bound by residues R315 and R320.

Belongs to the RuvB family. Homohexamer. Forms an RuvA(8)-RuvB(12)-Holliday junction (HJ) complex. HJ DNA is sandwiched between 2 RuvA tetramers; dsDNA enters through RuvA and exits via RuvB. An RuvB hexamer assembles on each DNA strand where it exits the tetramer. Each RuvB hexamer is contacted by two RuvA subunits (via domain III) on 2 adjacent RuvB subunits; this complex drives branch migration. In the full resolvosome a probable DNA-RuvA(4)-RuvB(12)-RuvC(2) complex forms which resolves the HJ.

The protein resides in the cytoplasm. It carries out the reaction ATP + H2O = ADP + phosphate + H(+). Functionally, the RuvA-RuvB-RuvC complex processes Holliday junction (HJ) DNA during genetic recombination and DNA repair, while the RuvA-RuvB complex plays an important role in the rescue of blocked DNA replication forks via replication fork reversal (RFR). RuvA specifically binds to HJ cruciform DNA, conferring on it an open structure. The RuvB hexamer acts as an ATP-dependent pump, pulling dsDNA into and through the RuvAB complex. RuvB forms 2 homohexamers on either side of HJ DNA bound by 1 or 2 RuvA tetramers; 4 subunits per hexamer contact DNA at a time. Coordinated motions by a converter formed by DNA-disengaged RuvB subunits stimulates ATP hydrolysis and nucleotide exchange. Immobilization of the converter enables RuvB to convert the ATP-contained energy into a lever motion, pulling 2 nucleotides of DNA out of the RuvA tetramer per ATP hydrolyzed, thus driving DNA branch migration. The RuvB motors rotate together with the DNA substrate, which together with the progressing nucleotide cycle form the mechanistic basis for DNA recombination by continuous HJ branch migration. Branch migration allows RuvC to scan DNA until it finds its consensus sequence, where it cleaves and resolves cruciform DNA. This is Holliday junction branch migration complex subunit RuvB from Mycobacterium marinum (strain ATCC BAA-535 / M).